The sequence spans 138 residues: Acidic phospholipase A2 BthA-1 (138 aa).

The first 16 residues, 1–16 (MRTLWIMAVLLVGVEG), serve as a signal peptide directing secretion. 7 cysteine pairs are disulfide-bonded: cysteine 42–cysteine 131, cysteine 44–cysteine 60, cysteine 59–cysteine 111, cysteine 65–cysteine 138, cysteine 66–cysteine 104, cysteine 73–cysteine 97, and cysteine 91–cysteine 102. Residues tyrosine 43, glycine 47, and glycine 48 each coordinate Ca(2+). Histidine 63 is an active-site residue. Ca(2+) is bound at residue aspartate 64. Residue aspartate 105 is part of the active site.

It belongs to the phospholipase A2 family. Group II subfamily. D49 sub-subfamily. In terms of assembly, homodimer; non-covalently linked. Ca(2+) serves as cofactor. Expressed by the venom gland.

Its subcellular location is the secreted. It catalyses the reaction a 1,2-diacyl-sn-glycero-3-phosphocholine + H2O = a 1-acyl-sn-glycero-3-phosphocholine + a fatty acid + H(+). Inhibited by EDTA and bromophenacyl bromide (BPB). Its function is as follows. Snake venom phospholipase A2 (PLA2) that displays edema-inducing activities (activity that is inhibited by EDTA and dexamethasone), inhibits phospholipid-dependent collagen/ADP-induced platelet aggregation, possess hypotensive as well as anticoagulant activities. In addition, this enzyme shows bactericidal activity against E.coli and S.aureus. PLA2 catalyzes the calcium-dependent hydrolysis of the 2-acyl groups in 3-sn-phosphoglycerides. In Bothrops jararacussu (Jararacussu), this protein is Acidic phospholipase A2 BthA-1.